Consider the following 624-residue polypeptide: Protein NRT1/ PTR FAMILY 6.1 (624 aa).

Residues M1–S20 form a disordered region. Helical transmembrane passes span M83–M100 and F114–G134. T138 is subject to Phosphothreonine. 10 helical membrane passes run I139–L159, S184–I204, F230–V250, W258–A278, L378–L398, V422–I442, V459–Y479, W504–L524, S537–L557, and C585–A605.

It belongs to the major facilitator superfamily. Proton-dependent oligopeptide transporter (POT/PTR) (TC 2.A.17) family. Expressed in flower and siliques.

It localises to the membrane. This Arabidopsis thaliana (Mouse-ear cress) protein is Protein NRT1/ PTR FAMILY 6.1 (NPF6.1).